The following is a 399-amino-acid chain: MADTRSRRLFTSESVTEGHPDKICDQISDSILDEILKEDPNARVACETSVTTGLVLVAGEITTSTYVDIPKVVRDTIRNIGYTRAKYGFDSETCAVLTSIDEQSPDIAQGVNQALEAREGQMTDAEIEAIGAGDQGLMFGYANNETPELMPLPISLSHKLARRLSEARKGEILPYLRPDGKTQVTVEYDENDQSVRIDTIVISTQHHPEVTLEQIESDLKQHVIRSVVPEELIDEETKYFINPTGRFVIGGPQGDAGLTGRKIIVDTYGGYARHGGGAFSGKDPTKVDRSGAYAARYVAKNIVAAGLADKCEVQLAYAIGVAKPVSISIDTFGTGQVSEARLVELVREHFDLRPAGIIKMLDLRRPIYKQTAAYGHFGRTDVELPWEQTDKAEILRQQA.

An ATP-binding site is contributed by His-19. Asp-21 serves as a coordination point for Mg(2+). K(+) is bound at residue Glu-47. L-methionine-binding residues include Glu-60 and Gln-103. The tract at residues Gln-103–Gln-113 is flexible loop. Residues Asp-179 to Lys-181, Arg-246 to Phe-247, Asp-255, Arg-261 to Lys-262, Ala-278, and Lys-282 contribute to the ATP site. Asp-255 contacts L-methionine. Lys-286 contributes to the L-methionine binding site.

It belongs to the AdoMet synthase family. Homotetramer; dimer of dimers. Requires Mg(2+) as cofactor. It depends on K(+) as a cofactor.

It is found in the cytoplasm. The catalysed reaction is L-methionine + ATP + H2O = S-adenosyl-L-methionine + phosphate + diphosphate. Its pathway is amino-acid biosynthesis; S-adenosyl-L-methionine biosynthesis; S-adenosyl-L-methionine from L-methionine: step 1/1. Functionally, catalyzes the formation of S-adenosylmethionine (AdoMet) from methionine and ATP. The overall synthetic reaction is composed of two sequential steps, AdoMet formation and the subsequent tripolyphosphate hydrolysis which occurs prior to release of AdoMet from the enzyme. This Halalkalibacterium halodurans (strain ATCC BAA-125 / DSM 18197 / FERM 7344 / JCM 9153 / C-125) (Bacillus halodurans) protein is S-adenosylmethionine synthase.